The following is a 274-amino-acid chain: Beta-lactamase OXA-9 (274 aa).

The N-terminal stretch at 1 to 24 (MKKILLLHMLVFVSATLPISSVAS) is a signal peptide. S58 functions as the Acyl-ester intermediate in the catalytic mechanism. K61 carries the N6-carboxylysine modification. Substrate is bound at residue 206–208 (KSG).

Belongs to the class-D beta-lactamase family.

It catalyses the reaction a beta-lactam + H2O = a substituted beta-amino acid. Functionally, oxacillin-hydrolyzing beta-lactamase. Confers resistance to beta-lactam antibiotics but at a significantly lower level than the TEM bla gene product. This Klebsiella aerogenes (Enterobacter aerogenes) protein is Beta-lactamase OXA-9 (bla).